Here is a 621-residue protein sequence, read N- to C-terminus: UvrABC system protein C (621 aa).

The GIY-YIG domain maps to 13 to 92; that stretch reads NEPGVYLMKN…IKKYSPKYNI (80 aa). Residues 204–239 form the UVR domain; that stretch reads RSLLNKLKEEMQSASGNLEFEKAASLRDKMIAIENI.

This sequence belongs to the UvrC family. In terms of assembly, interacts with UvrB in an incision complex.

It is found in the cytoplasm. The UvrABC repair system catalyzes the recognition and processing of DNA lesions. UvrC both incises the 5' and 3' sides of the lesion. The N-terminal half is responsible for the 3' incision and the C-terminal half is responsible for the 5' incision. The chain is UvrABC system protein C from Clostridium beijerinckii (strain ATCC 51743 / NCIMB 8052) (Clostridium acetobutylicum).